Consider the following 90-residue polypeptide: Chromosomal protein MC1c (90 aa).

Its function is as follows. Protects DNA against thermal denaturation and modulates transcription. The polypeptide is Chromosomal protein MC1c (Methanothrix soehngenii (Methanosaeta concilii)).